The sequence spans 118 residues: Large ribosomal subunit protein bL21c (118 aa).

Belongs to the bacterial ribosomal protein bL21 family. Part of the 50S ribosomal subunit.

Its subcellular location is the plastid. It localises to the chloroplast. This protein binds to 23S rRNA. This Psilotum nudum (Whisk fern) protein is Large ribosomal subunit protein bL21c.